Reading from the N-terminus, the 212-residue chain is Methylthioribulose-1-phosphate dehydratase (212 aa).

Residues histidine 103 and histidine 105 each coordinate Zn(2+).

This sequence belongs to the aldolase class II family. MtnB subfamily. The cofactor is Zn(2+).

It catalyses the reaction 5-(methylsulfanyl)-D-ribulose 1-phosphate = 5-methylsulfanyl-2,3-dioxopentyl phosphate + H2O. It participates in amino-acid biosynthesis; L-methionine biosynthesis via salvage pathway; L-methionine from S-methyl-5-thio-alpha-D-ribose 1-phosphate: step 2/6. Functionally, catalyzes the dehydration of methylthioribulose-1-phosphate (MTRu-1-P) into 2,3-diketo-5-methylthiopentyl-1-phosphate (DK-MTP-1-P). The sequence is that of Methylthioribulose-1-phosphate dehydratase from Sorangium cellulosum (strain So ce56) (Polyangium cellulosum (strain So ce56)).